Consider the following 82-residue polypeptide: Sulfur carrier protein TusA (82 aa).

Cys-19 functions as the Cysteine persulfide intermediate in the catalytic mechanism.

The protein belongs to the sulfur carrier protein TusA family.

The protein localises to the cytoplasm. Sulfur carrier protein which probably makes part of a sulfur-relay system. The protein is Sulfur carrier protein TusA of Tolumonas auensis (strain DSM 9187 / NBRC 110442 / TA 4).